The following is a 208-amino-acid chain: Protein-L-isoaspartate O-methyltransferase (208 aa).

Residue S59 is part of the active site.

The protein belongs to the methyltransferase superfamily. L-isoaspartyl/D-aspartyl protein methyltransferase family.

It is found in the cytoplasm. The enzyme catalyses [protein]-L-isoaspartate + S-adenosyl-L-methionine = [protein]-L-isoaspartate alpha-methyl ester + S-adenosyl-L-homocysteine. In terms of biological role, catalyzes the methyl esterification of L-isoaspartyl residues in peptides and proteins that result from spontaneous decomposition of normal L-aspartyl and L-asparaginyl residues. It plays a role in the repair and/or degradation of damaged proteins. The sequence is that of Protein-L-isoaspartate O-methyltransferase from Photorhabdus laumondii subsp. laumondii (strain DSM 15139 / CIP 105565 / TT01) (Photorhabdus luminescens subsp. laumondii).